The primary structure comprises 205 residues: Protein PYRAB00100 (205 aa).

The 195-residue stretch at 7 to 201 (EWGEFLVRLA…EEYPRGPVRR (195 aa)) folds into the AMMECR1 domain.

This Pyrococcus abyssi (strain GE5 / Orsay) protein is Protein PYRAB00100.